A 57-amino-acid polypeptide reads, in one-letter code: Large ribosomal subunit protein uL30 (57 aa).

It belongs to the universal ribosomal protein uL30 family. In terms of assembly, part of the 50S ribosomal subunit.

In Acholeplasma laidlawii (strain PG-8A), this protein is Large ribosomal subunit protein uL30.